Reading from the N-terminus, the 135-residue chain is Ribonuclease P protein component (135 aa).

Belongs to the RnpA family. As to quaternary structure, consists of a catalytic RNA component (M1 or rnpB) and a protein subunit.

It carries out the reaction Endonucleolytic cleavage of RNA, removing 5'-extranucleotides from tRNA precursor.. Functionally, RNaseP catalyzes the removal of the 5'-leader sequence from pre-tRNA to produce the mature 5'-terminus. It can also cleave other RNA substrates such as 4.5S RNA. The protein component plays an auxiliary but essential role in vivo by binding to the 5'-leader sequence and broadening the substrate specificity of the ribozyme. The chain is Ribonuclease P protein component from Pseudomonas aeruginosa (strain LESB58).